The following is a 519-amino-acid chain: 2,3-bisphosphoglycerate-independent phosphoglycerate mutase (519 aa).

Mn(2+) contacts are provided by Asp9 and Ser60. Residue Ser60 is the Phosphoserine intermediate of the active site. The span at 76–91 (DSARVSDSIARSRGEA) shows a compositional bias: basic and acidic residues. Residues 76 to 102 (DSARVSDSIARSRGEAPPDDDAQDPPF) are disordered. Substrate is bound by residues His134, 163 to 164 (RD), Arg195, Arg201, 267 to 270 (RSDR), and Lys341. The Mn(2+) site is built by Asp408, His412, Asp449, His450, and His466.

Belongs to the BPG-independent phosphoglycerate mutase family. The cofactor is Mn(2+).

The catalysed reaction is (2R)-2-phosphoglycerate = (2R)-3-phosphoglycerate. It participates in carbohydrate degradation; glycolysis; pyruvate from D-glyceraldehyde 3-phosphate: step 3/5. Its function is as follows. Catalyzes the interconversion of 2-phosphoglycerate and 3-phosphoglycerate. The sequence is that of 2,3-bisphosphoglycerate-independent phosphoglycerate mutase from Haloarcula marismortui (strain ATCC 43049 / DSM 3752 / JCM 8966 / VKM B-1809) (Halobacterium marismortui).